Consider the following 155-residue polypeptide: Ribosomal RNA large subunit methyltransferase H (155 aa).

Residues leucine 72, glycine 103, and 122–127 each bind S-adenosyl-L-methionine; that span reads LSALTL.

The protein belongs to the RNA methyltransferase RlmH family. In terms of assembly, homodimer.

Its subcellular location is the cytoplasm. It catalyses the reaction pseudouridine(1915) in 23S rRNA + S-adenosyl-L-methionine = N(3)-methylpseudouridine(1915) in 23S rRNA + S-adenosyl-L-homocysteine + H(+). Specifically methylates the pseudouridine at position 1915 (m3Psi1915) in 23S rRNA. The polypeptide is Ribosomal RNA large subunit methyltransferase H (Cronobacter sakazakii (strain ATCC BAA-894) (Enterobacter sakazakii)).